Reading from the N-terminus, the 652-residue chain is MAEISLTFPDGAIKKFDEGIKPIGVAESISKSLAKKSVSGKINGSYIGMNDVITESGDFQLITTSDSEALDLLRHSASHLLAQALKRIPKFANIHFGVGPFIENGFYYDTDNGAGNQVSIEDFPEIEAIMHKIVKEDLPILSREITRDEALEIFADDPYKVELVNDLPVDEKITIAVQGDHIELDKGGLVPSTGWIKHFKLTSVAGAYWRGDSSNPMMQRVYGTAFWKAADVEAEIARREEAKERDHRVIGRDLDLFFTSQEVGSGLPVWLPNGATIRRQVERYITDKELSNGYQHVYTPVLSNLNLYKTSGHWDHYREDMFPPMDMGDGEFLELRPMNCPSHIMVFNHKPRSYRELPMRIAELGMMHRYEKSGALTGLSRVREMTLNDGHTFVEPEKLEEEFKSILTMMMGVYRDFNIKDYRFRLSYRDPKNTEKYFDDDEMWEKSQKQLKTAMDDLGLDYFEAEGEAAFYGPKLDVQTKTALGNEETLSTIQLDFLLPERFDLKYIGRDGLDNHRPVMLHRGIVGTMERFTAYLIEMYKGAFPTWLSPLQVQIIPVNLGAHGNYANAVQQKLQDAGLRANVETKDAKMGYLIREAQTNKIPYTLVLGDSEVNSNTVTVRKYGDTKTVTMSYDEFQYLILSDVSNYSRETE.

Residues 1–63 (MAEISLTFPD…TESGDFQLIT (63 aa)) enclose the TGS domain. The catalytic stretch occupies residues 246 to 545 (DHRVIGRDLD…LIEMYKGAFP (300 aa)). The Zn(2+) site is built by C340, H391, and H522.

It belongs to the class-II aminoacyl-tRNA synthetase family. As to quaternary structure, homodimer. Requires Zn(2+) as cofactor.

It localises to the cytoplasm. The enzyme catalyses tRNA(Thr) + L-threonine + ATP = L-threonyl-tRNA(Thr) + AMP + diphosphate + H(+). Its function is as follows. Catalyzes the attachment of threonine to tRNA(Thr) in a two-step reaction: L-threonine is first activated by ATP to form Thr-AMP and then transferred to the acceptor end of tRNA(Thr). Also edits incorrectly charged L-seryl-tRNA(Thr). This is Threonine--tRNA ligase from Leuconostoc mesenteroides subsp. mesenteroides (strain ATCC 8293 / DSM 20343 / BCRC 11652 / CCM 1803 / JCM 6124 / NCDO 523 / NBRC 100496 / NCIMB 8023 / NCTC 12954 / NRRL B-1118 / 37Y).